The following is a 411-amino-acid chain: LL-diaminopimelate aminotransferase (411 aa).

Substrate-binding residues include Tyr15 and Gly42. Pyridoxal 5'-phosphate contacts are provided by residues Tyr72, 108–109, Tyr132, Asn187, Tyr218, and 246–248; these read AK and SFS. Residues Lys109, Tyr132, and Asn187 each contribute to the substrate site. An N6-(pyridoxal phosphate)lysine modification is found at Lys249. Residues Arg257 and Asn292 each contribute to the pyridoxal 5'-phosphate site. Residues Asn292 and Arg388 each contribute to the substrate site.

This sequence belongs to the class-I pyridoxal-phosphate-dependent aminotransferase family. LL-diaminopimelate aminotransferase subfamily. In terms of assembly, homodimer. The cofactor is pyridoxal 5'-phosphate.

It catalyses the reaction (2S,6S)-2,6-diaminopimelate + 2-oxoglutarate = (S)-2,3,4,5-tetrahydrodipicolinate + L-glutamate + H2O + H(+). It functions in the pathway amino-acid biosynthesis; L-lysine biosynthesis via DAP pathway; LL-2,6-diaminopimelate from (S)-tetrahydrodipicolinate (aminotransferase route): step 1/1. Functionally, involved in the synthesis of meso-diaminopimelate (m-DAP or DL-DAP), required for both lysine and peptidoglycan biosynthesis. Catalyzes the direct conversion of tetrahydrodipicolinate to LL-diaminopimelate. In Rippkaea orientalis (strain PCC 8801 / RF-1) (Cyanothece sp. (strain PCC 8801)), this protein is LL-diaminopimelate aminotransferase.